The primary structure comprises 63 residues: Large ribosomal subunit protein uL30 (63 aa).

Belongs to the universal ribosomal protein uL30 family. Part of the 50S ribosomal subunit.

This chain is Large ribosomal subunit protein uL30, found in Rickettsia peacockii (strain Rustic).